The primary structure comprises 1098 residues: Ubiquitin carboxyl-terminal hydrolase 36 (1098 aa).

Residues 72–86 (RHRSGDELQARKPGT) show a composition bias toward basic and acidic residues. The disordered stretch occupies residues 72-97 (RHRSGDELQARKPGTERVSGSGGDGV). Positions 122 to 423 (AGLHNLGNTC…QAYVLFYLRI (302 aa)) constitute a USP domain. Cysteine 131 acts as the Nucleophile in catalysis. Histidine 382 functions as the Proton acceptor in the catalytic mechanism. 2 disordered regions span residues 428–464 (KSPEGPVSRVGATLPSRPKVVPEHSKKSPGNGVVPSP) and 483–574 (EVGV…RDTI). Phosphoserine is present on residues serine 429, serine 463, serine 547, and serine 578. Residues 540-558 (PLQSLTTSPTTSQGSPGTG) show a composition bias toward low complexity. Residues 589–640 (GHRLKGEGSGVDLEKGDSSSSSPEHSASSDPAKAPQTAESRAAHACDSQGTN) are disordered. Over residues 606–617 (SSSSSPEHSASS) the composition is skewed to low complexity. Serine 663 carries the phosphoserine modification. 2 disordered regions span residues 664-710 (PALS…SPSA) and 722-973 (HPVV…ALSV). Positions 665–677 (ALSSTTTEPTSLM) are enriched in polar residues. Serine 678 bears the Phosphoserine mark. Residues 683–692 (KKLALSAKKA) are compositionally biased toward low complexity. Position 709 is a phosphoserine (serine 709). Over residues 746–763 (HPHSASLSSSSAKPLGTS) the composition is skewed to low complexity. Residues 853–878 (GQFQDQSWSSGSQKEEGTQPQVNGHQ) are compositionally biased toward polar residues. Positions 889 to 898 (SSRKRRKRKR) are enriched in basic residues. Positions 901 to 917 (GLSQEATPSQDLIQHSC) are enriched in polar residues. The span at 921 to 932 (DHSEPEARTELQ) shows a compositional bias: basic and acidic residues. The span at 933–943 (KKKKKKRRKRK) shows a compositional bias: basic residues. The span at 944–960 (PEPQQDEESKHPGDQRS) shows a compositional bias: basic and acidic residues.

The protein belongs to the peptidase C19 family. As to quaternary structure, interacts with isoform 3 of FBXW7; the interaction inhibits MYC degradation induced by SCF(FBW7) complex. Interacts with NTRK1; USP36 does not deubiquitinate NTRK1. Interacts with NEDD4L (via domains WW1, 3 and 4); the interaction inhibits ubiquitination of, at least, NTRK1, KCNQ2 and KCNQ3 by NEDD4L. Interacts (via C-terminus) with EXOSC10 (via C-terminus); the interaction is facilitated by the association with RNA and promotes sumoylation of EXOSC10. Polyubiquitinated by NEDD4L, no effect on USP36 protein levels. Both proteins interact with and regulate each other's ubiquitination levels.

Its subcellular location is the nucleus. The protein localises to the nucleolus. It localises to the cytoplasm. It carries out the reaction Thiol-dependent hydrolysis of ester, thioester, amide, peptide and isopeptide bonds formed by the C-terminal Gly of ubiquitin (a 76-residue protein attached to proteins as an intracellular targeting signal).. In terms of biological role, deubiquitinase essential for the regulation of nucleolar structure and function. Required for cell and organism viability. Plays an important role in ribosomal RNA processing and protein synthesis, which is mediated, at least in part, through deubiquitination of DHX33, NPM1 and FBL, regulating their protein stability. Functions as a transcriptional repressor by deubiquiting histone H2B at the promoters of genes critical for cellular differentiation, such as CDKN1A, thereby preventing histone H3 'Lys-4' trimethylation (H3K4). Specifically deubiquitinates MYC in the nucleolus, leading to prevent MYC degradation by the proteasome: acts by specifically interacting with isoform 3 of FBXW7 (FBW7gamma) in the nucleolus and counteracting ubiquitination of MYC by the SCF(FBW7) complex. In contrast, it does not interact with isoform 1 of FBXW7 (FBW7alpha) in the nucleoplasm. Interacts to and regulates the actions of E3 ubiquitin-protein ligase NEDD4L over substrates such as NTRK1, KCNQ2 and KCNQ3, affecting their expression an functions. Deubiquitinates SOD2, regulates SOD2 protein stability. Deubiquitinase activity is required to control selective autophagy activation by ubiquitinated proteins. Promotes CEP63 stabilization through 'Lys-48'-linked deubiquitination leading to increased stability. Acts as a SUMO ligase to promote EXOSC10 sumoylation critical for the nucleolar RNA exosome function in rRNA processing. Binds to pre-rRNAs. This is Ubiquitin carboxyl-terminal hydrolase 36 (Usp36) from Mus musculus (Mouse).